The sequence spans 653 residues: Glyceraldehyde-3-phosphate:ferredoxin oxidoreductase (653 aa).

Tungstopterin is bound by residues Arg-70, Gly-89, Arg-196, Ala-197, Gly-199, and Arg-206. The [4Fe-4S] cluster site is built by Cys-333 and Cys-337. Residues Asp-378, Asp-383, and Asp-544 each contribute to the tungstopterin site. Residue Cys-549 participates in [4Fe-4S] cluster binding.

This sequence belongs to the AOR/FOR family. As to quaternary structure, monomer. The cofactor is [4Fe-4S] cluster. Tungstopterin is required as a cofactor.

The enzyme catalyses D-glyceraldehyde 3-phosphate + 2 oxidized [2Fe-2S]-[ferredoxin] + H2O = (2R)-3-phosphoglycerate + 2 reduced [2Fe-2S]-[ferredoxin] + 3 H(+). Its activity is regulated as follows. Sensitive to oxygen. Activity increased by 58%-93% in the presence of acetyl phosphate, 3-phosphoglycerate or 2,3-bisphosphoglycerate at 10 mM concentration. Inhibited by up to 25% in the presence of crotonaldehyde or formaldehyde at 10 mM concentration. Inhibited by up to 50% by sodium dithionate. 3.5-fold increase in activity observed by addition of potassium phosphate or sodium arsenate at 200 mM concentration. Activity enhanced by potassium chloride, sodium citrate or sodium sulfate at 200 mM concentration. Catalyzes the oxidation of glyceraldehyde-3-phosphate to 3-phosphoglycerate. Uses ferredoxin as electron acceptor. In vitro can also use benzyl viologen, but not NADP or NAD, as electron acceptor. Probably acts as a glycolytic enzyme in place of glyceraldehyde-3-phosphate dehydrogenase (GAPDH) and phosphoglycerate kinase (PGK) in an unusual Emden-Meyerhof glycolysis. In Pyrococcus furiosus (strain ATCC 43587 / DSM 3638 / JCM 8422 / Vc1), this protein is Glyceraldehyde-3-phosphate:ferredoxin oxidoreductase.